The primary structure comprises 232 residues: Leucyl/phenylalanyl-tRNA--protein transferase (232 aa).

Belongs to the L/F-transferase family.

It is found in the cytoplasm. The catalysed reaction is N-terminal L-lysyl-[protein] + L-leucyl-tRNA(Leu) = N-terminal L-leucyl-L-lysyl-[protein] + tRNA(Leu) + H(+). It catalyses the reaction N-terminal L-arginyl-[protein] + L-leucyl-tRNA(Leu) = N-terminal L-leucyl-L-arginyl-[protein] + tRNA(Leu) + H(+). It carries out the reaction L-phenylalanyl-tRNA(Phe) + an N-terminal L-alpha-aminoacyl-[protein] = an N-terminal L-phenylalanyl-L-alpha-aminoacyl-[protein] + tRNA(Phe). Functions in the N-end rule pathway of protein degradation where it conjugates Leu, Phe and, less efficiently, Met from aminoacyl-tRNAs to the N-termini of proteins containing an N-terminal arginine or lysine. The protein is Leucyl/phenylalanyl-tRNA--protein transferase of Nitrosospira multiformis (strain ATCC 25196 / NCIMB 11849 / C 71).